Reading from the N-terminus, the 309-residue chain is Homoserine O-succinyltransferase (309 aa).

Cys142 serves as the catalytic Acyl-thioester intermediate. The substrate site is built by Lys163 and Ser192. The active-site Proton acceptor is the His235. Glu237 is a catalytic residue. Residue Arg249 participates in substrate binding.

This sequence belongs to the MetA family.

It localises to the cytoplasm. It catalyses the reaction L-homoserine + succinyl-CoA = O-succinyl-L-homoserine + CoA. The protein operates within amino-acid biosynthesis; L-methionine biosynthesis via de novo pathway; O-succinyl-L-homoserine from L-homoserine: step 1/1. In terms of biological role, transfers a succinyl group from succinyl-CoA to L-homoserine, forming succinyl-L-homoserine. This chain is Homoserine O-succinyltransferase, found in Cronobacter sakazakii (strain ATCC BAA-894) (Enterobacter sakazakii).